We begin with the raw amino-acid sequence, 364 residues long: 3'(2'),5'-bisphosphate nucleotidase 1 (364 aa).

Asp-54 acts as the Proton acceptor in catalysis. Mg(2+)-binding residues include Glu-77, Asp-141, Ile-143, and Asp-144. Residue Thr-146 is the Proton acceptor of the active site. Thr-146, His-243, Ser-272, Lys-275, Arg-289, and Asp-302 together coordinate adenosine 3',5'-bisphosphate. AMP is bound by residues His-243, Ser-272, Lys-275, Arg-289, and Asp-302. Position 302 (Asp-302) interacts with Mg(2+).

The protein belongs to the inositol monophosphatase superfamily. It depends on Mg(2+) as a cofactor.

It catalyses the reaction 3'-phosphoadenylyl sulfate + H2O = adenosine 5'-phosphosulfate + phosphate. The catalysed reaction is adenosine 3',5'-bisphosphate + H2O = AMP + phosphate. It carries out the reaction adenosine 2',5'-bisphosphate + H2O = AMP + phosphate. Phosphatase that converts adenosine 3'-phosphate 5'-phosphosulfate (PAPS) to adenosine 5'-phosphosulfate (APS) and 3'(2')-phosphoadenosine 5'-phosphate (PAP) to AMP. Regulates the flux of sulfur in the sulfur-activation pathway by converting PAPS to APS. Involved in salt tolerance. This chain is 3'(2'),5'-bisphosphate nucleotidase 1 (HAL21), found in Candida albicans (strain SC5314 / ATCC MYA-2876) (Yeast).